We begin with the raw amino-acid sequence, 211 residues long: MTTLTRQDLNFGQVVADILCEFLEVAVHLILYVREVYPIGIFQKRKKYNVPVQMSCHPELNRYIQDTLHCVKPLIEKNDVEKVVVVILDKEHHPVERFVFEIAQPPLLSISSDSLLSHVEQLLRAFILKISVCDAVLDNNPPGCTFTLLVHTREAATRNMEKIQVIKDFPWILADEQDVHMQEPRLIPLKTMTSDILKMQLYVEERAQKST.

The region spanning Gln13–Val203 is the HORMA domain.

In terms of assembly, homooligomer. Interacts with rev1. Interacts with rev3l. Interacts with fzr1 (in complex with the anaphase promoting complex APC). May interact with cdc20.

It localises to the nucleus. It is found in the cytoplasm. The protein localises to the cytoskeleton. The protein resides in the spindle. Adapter protein able to interact with different proteins and involved in different biological processes. Mediates the interaction between the error-prone DNA polymerase zeta catalytic subunit rev3l and the inserter polymerase rev1, thereby mediating the second polymerase switching in translesion DNA synthesis. Translesion DNA synthesis releases the replication blockade of replicative polymerases, stalled in presence of DNA lesions. May also play a role in signal transduction in response to DNA damage. May regulate the activation of the anaphase promoting complex APC thereby regulating progression through the cell cycle. Through transcriptional regulation may play a role in epithelial-mesenchymal transdifferentiation. This chain is Mitotic spindle assembly checkpoint protein MAD2B (mad2l2), found in Xenopus tropicalis (Western clawed frog).